The following is a 458-amino-acid chain: Tetratricopeptide repeat protein 23-like (458 aa).

Coiled-coil stretches lie at residues 175–198 and 246–278; these read GKQA…LNNG and TSEL…QAYS.

It localises to the cytoplasm. Its subcellular location is the cytoskeleton. It is found in the microtubule organizing center. The protein resides in the centrosome. The protein localises to the spindle. It localises to the midbody. The chain is Tetratricopeptide repeat protein 23-like (Ttc23l) from Mus musculus (Mouse).